The sequence spans 643 residues: Thread biopolymer filament subunit alpha (643 aa).

Residues 1 to 13 are compositionally biased toward polar residues; that stretch reads MSISQTVSKSYTK. Residues 1–34 are disordered; it reads MSISQTVSKSYTKSVSRGGQGVSYSQSSSHKVGG. The interval 1 to 191 is head; it reads MSISQTVSKS…PDTVQHTRIR (191 aa). Over residues 14 to 31 the composition is skewed to low complexity; sequence SVSRGGQGVSYSQSSSHK. Positions 192–510 constitute an IF rod domain; the sequence is EKQDLQTLNT…KLLDSEETRI (319 aa). The tract at residues 193-227 is coil 1A; that stretch reads KQDLQTLNTKFANLVDQVRTLEQHNAILKAQISMI. The tract at residues 228–240 is linker 1; sequence TSPSDTPEGPVNT. Residues 241–341 are coil 1B; it reads AVVASTVTAT…YNARVREVQA (101 aa). The segment at 342-362 is linker 12; the sequence is AVTGGPTAAYSIRVDNTHQAI. The tract at residues 363–381 is coil 2A; sequence DLTTSLQEMKTHYEVLATK. The segment at 382–389 is linker 2; sequence SREEAFTQ. Positions 390 to 510 are coil 2B; sequence VQPRIQEMAV…KLLDSEETRI (121 aa). Residues 511–643 form a tail region; that stretch reads SHGGGITITT…SSARSSSRIY (133 aa). The disordered stretch occupies residues 622–643; it reads SRAGYSASRKSYSSARSSSRIY.

This sequence belongs to the intermediate filament family. Coiled-coil heterodimer of an alpha and a gamma subunit. Assemble into 10 nm filaments. Forms a massive, conical, intermediate filament biopolymer of approximately 60 cm.

The protein localises to the secreted. Its subcellular location is the extracellular space. Released extracellularly into seawater and provides physical and biological defense against invasive organism by modulation of the viscoelastic properties of mucus. In Eptatretus stoutii (Pacific hagfish), this protein is Thread biopolymer filament subunit alpha.